We begin with the raw amino-acid sequence, 341 residues long: tRNA N6-adenosine threonylcarbamoyltransferase (341 aa).

His114 and His118 together coordinate Fe cation. Substrate is bound by residues 136–140 (LVSGG), Asp169, Gly182, Asp186, and Asn278. Asp304 serves as a coordination point for Fe cation.

The protein belongs to the KAE1 / TsaD family. The cofactor is Fe(2+).

It localises to the cytoplasm. It catalyses the reaction L-threonylcarbamoyladenylate + adenosine(37) in tRNA = N(6)-L-threonylcarbamoyladenosine(37) in tRNA + AMP + H(+). In terms of biological role, required for the formation of a threonylcarbamoyl group on adenosine at position 37 (t(6)A37) in tRNAs that read codons beginning with adenine. Is involved in the transfer of the threonylcarbamoyl moiety of threonylcarbamoyl-AMP (TC-AMP) to the N6 group of A37, together with TsaE and TsaB. TsaD likely plays a direct catalytic role in this reaction. The protein is tRNA N6-adenosine threonylcarbamoyltransferase of Lactococcus lactis subsp. cremoris (strain SK11).